Here is a 376-residue protein sequence, read N- to C-terminus: Metal tolerance protein 6 (376 aa).

The disordered stretch occupies residues 1-28 (MAAAAGVAAGTGRGSGEGEELLPNAVEG). Residues 1-123 (MAAAAGVAAG…CEKVARSEAL (123 aa)) lie on the Cytoplasmic side of the membrane. A helical transmembrane segment spans residues 124–144 (AIRLSNIANMVLFAAKVYASI). Residues 145 to 149 (RSGSL) lie on the Vacuolar side of the membrane. The chain crosses the membrane as a helical span at residues 150–170 (AIIASTLDSLLDLLSGFILWF). The Cytoplasmic segment spans residues 171–191 (TAFSKKTSNPYRYPIGKRRMQ). The helical transmembrane segment at 192-212 (PLGILVFASVMATLGLQIILE) threads the bilayer. The Vacuolar portion of the chain corresponds to 213–231 (STRSLFYDGDTFRLTKEQE). A helical membrane pass occupies residues 232–252 (KWVVDIMLSVTSVKLLLVVYC). Topologically, residues 253 to 376 (RSFTNEILAI…PEHARSHDTL (124 aa)) are cytoplasmic.

It belongs to the cation diffusion facilitator (CDF) transporter (TC 2.A.4) family. SLC30A subfamily.

It localises to the vacuole membrane. Functionally, involved in sequestration of excess metal in the cytoplasm into vacuoles to maintain metal homeostasis. This chain is Metal tolerance protein 6 (MTP6), found in Oryza sativa subsp. japonica (Rice).